The sequence spans 385 residues: 4-hydroxy-3-methylbut-2-en-1-yl diphosphate synthase (flavodoxin) 2 (385 aa).

C281, C284, C316, and E323 together coordinate [4Fe-4S] cluster.

It belongs to the IspG family. It depends on [4Fe-4S] cluster as a cofactor.

The catalysed reaction is (2E)-4-hydroxy-3-methylbut-2-enyl diphosphate + oxidized [flavodoxin] + H2O + 2 H(+) = 2-C-methyl-D-erythritol 2,4-cyclic diphosphate + reduced [flavodoxin]. It functions in the pathway isoprenoid biosynthesis; isopentenyl diphosphate biosynthesis via DXP pathway; isopentenyl diphosphate from 1-deoxy-D-xylulose 5-phosphate: step 5/6. Its function is as follows. Converts 2C-methyl-D-erythritol 2,4-cyclodiphosphate (ME-2,4cPP) into 1-hydroxy-2-methyl-2-(E)-butenyl 4-diphosphate. This is 4-hydroxy-3-methylbut-2-en-1-yl diphosphate synthase (flavodoxin) 2 from Streptomyces avermitilis (strain ATCC 31267 / DSM 46492 / JCM 5070 / NBRC 14893 / NCIMB 12804 / NRRL 8165 / MA-4680).